We begin with the raw amino-acid sequence, 261 residues long: uncharacterized protein (261 aa).

Residues 7–122 (TAVLADDEPL…RLASCCEKLQ (116 aa)) form the Response regulatory domain. Position 54 is a 4-aspartylphosphate (D54). Residues 157–261 (LKASKGEEIH…RALQHLFKVS (105 aa)) form the HTH LytTR-type domain.

This is an uncharacterized protein from Vibrio cholerae serotype O1 (strain ATCC 39315 / El Tor Inaba N16961).